The primary structure comprises 370 residues: Mitogen-activated protein kinase 3 (370 aa).

Positions 32–319 (YVPIKPIGRG…VTEALEHPYM (288 aa)) constitute a Protein kinase domain. Residues 38–46 (IGRGAYGIV) and Lys-61 contribute to the ATP site. Asp-158 acts as the Proton acceptor in catalysis. Phosphothreonine is present on Thr-191. The short motif at 191–193 (TEY) is the TXY element. Tyr-193 is modified (phosphotyrosine).

Belongs to the protein kinase superfamily. CMGC Ser/Thr protein kinase family. MAP kinase subfamily. Dually phosphorylated on Thr-191 and Tyr-193, which activates the enzyme.

It catalyses the reaction L-seryl-[protein] + ATP = O-phospho-L-seryl-[protein] + ADP + H(+). It carries out the reaction L-threonyl-[protein] + ATP = O-phospho-L-threonyl-[protein] + ADP + H(+). Activated by threonine and tyrosine phosphorylation. The chain is Mitogen-activated protein kinase 3 (MPK3) from Oryza sativa subsp. japonica (Rice).